The following is a 181-amino-acid chain: Ribulose bisphosphate carboxylase small subunit 3B, chloroplastic (181 aa).

A chloroplast-targeting transit peptide spans 1 to 54 (MASSMLSSAAVVTSPAQATMVAPFTGLKSSAAFPVTRKTNKDITSIASNGGRVS).

Belongs to the RuBisCO small chain family. Heterohexadecamer of 8 large and 8 small subunits.

Its subcellular location is the plastid. It is found in the chloroplast. Its function is as follows. RuBisCO catalyzes two reactions: the carboxylation of D-ribulose 1,5-bisphosphate, the primary event in carbon dioxide fixation, as well as the oxidative fragmentation of the pentose substrate. Both reactions occur simultaneously and in competition at the same active site. Although the small subunit is not catalytic it is essential for maximal activity. The chain is Ribulose bisphosphate carboxylase small subunit 3B, chloroplastic (RBCS-3B) from Arabidopsis thaliana (Mouse-ear cress).